Reading from the N-terminus, the 154-residue chain is D-aminoacyl-tRNA deacylase (154 aa).

The short motif at 138–139 is the Gly-cisPro motif, important for rejection of L-amino acids element; it reads GP.

This sequence belongs to the DTD family. In terms of assembly, homodimer.

The protein localises to the cytoplasm. The catalysed reaction is glycyl-tRNA(Ala) + H2O = tRNA(Ala) + glycine + H(+). The enzyme catalyses a D-aminoacyl-tRNA + H2O = a tRNA + a D-alpha-amino acid + H(+). In terms of biological role, an aminoacyl-tRNA editing enzyme that deacylates mischarged D-aminoacyl-tRNAs. Also deacylates mischarged glycyl-tRNA(Ala), protecting cells against glycine mischarging by AlaRS. Acts via tRNA-based rather than protein-based catalysis; rejects L-amino acids rather than detecting D-amino acids in the active site. By recycling D-aminoacyl-tRNA to D-amino acids and free tRNA molecules, this enzyme counteracts the toxicity associated with the formation of D-aminoacyl-tRNA entities in vivo and helps enforce protein L-homochirality. This is D-aminoacyl-tRNA deacylase from Halorhodospira halophila (strain DSM 244 / SL1) (Ectothiorhodospira halophila (strain DSM 244 / SL1)).